Consider the following 251-residue polypeptide: Triosephosphate isomerase (251 aa).

9-11 lines the substrate pocket; that stretch reads NWK. The active-site Electrophile is the His95. Glu167 acts as the Proton acceptor in catalysis. Residues Gly173, Ser213, and 234 to 235 contribute to the substrate site; that span reads GG.

The protein belongs to the triosephosphate isomerase family. Homodimer.

It is found in the cytoplasm. The catalysed reaction is D-glyceraldehyde 3-phosphate = dihydroxyacetone phosphate. The protein operates within carbohydrate biosynthesis; gluconeogenesis. Its pathway is carbohydrate degradation; glycolysis; D-glyceraldehyde 3-phosphate from glycerone phosphate: step 1/1. Involved in the gluconeogenesis. Catalyzes stereospecifically the conversion of dihydroxyacetone phosphate (DHAP) to D-glyceraldehyde-3-phosphate (G3P). This Carboxydothermus hydrogenoformans (strain ATCC BAA-161 / DSM 6008 / Z-2901) protein is Triosephosphate isomerase.